We begin with the raw amino-acid sequence, 147 residues long: Small ribosomal subunit protein eS19 (147 aa).

It belongs to the eukaryotic ribosomal protein eS19 family. Component of the small ribosomal subunit.

It is found in the cytoplasm. Its subcellular location is the nucleus. Component of the small ribosomal subunit. The ribosome is a large ribonucleoprotein complex responsible for the synthesis of proteins in the cell. Required for pre-rRNA processing and maturation of 40S ribosomal subunits. The protein is Small ribosomal subunit protein eS19 (rps19) of Gillichthys mirabilis (Long-jawed mudsucker).